A 181-amino-acid polypeptide reads, in one-letter code: Protein GrpE (181 aa).

A compositionally biased stretch (polar residues) spans 1-12 (MENTQENPTTPS). Residues 1–33 (MENTQENPTTPSAEDIGSEKQAAQGAAPAAEAA) are disordered. Over residues 21 to 33 (QAAQGAAPAAEAA) the composition is skewed to low complexity.

This sequence belongs to the GrpE family. In terms of assembly, homodimer.

The protein localises to the cytoplasm. In terms of biological role, participates actively in the response to hyperosmotic and heat shock by preventing the aggregation of stress-denatured proteins, in association with DnaK and GrpE. It is the nucleotide exchange factor for DnaK and may function as a thermosensor. Unfolded proteins bind initially to DnaJ; upon interaction with the DnaJ-bound protein, DnaK hydrolyzes its bound ATP, resulting in the formation of a stable complex. GrpE releases ADP from DnaK; ATP binding to DnaK triggers the release of the substrate protein, thus completing the reaction cycle. Several rounds of ATP-dependent interactions between DnaJ, DnaK and GrpE are required for fully efficient folding. This Burkholderia cenocepacia (strain HI2424) protein is Protein GrpE.